The chain runs to 493 residues: Proline--tRNA ligase (493 aa).

This sequence belongs to the class-II aminoacyl-tRNA synthetase family. ProS type 3 subfamily. Homodimer.

It is found in the cytoplasm. The enzyme catalyses tRNA(Pro) + L-proline + ATP = L-prolyl-tRNA(Pro) + AMP + diphosphate. Functionally, catalyzes the attachment of proline to tRNA(Pro) in a two-step reaction: proline is first activated by ATP to form Pro-AMP and then transferred to the acceptor end of tRNA(Pro). The chain is Proline--tRNA ligase from Azobacteroides pseudotrichonymphae genomovar. CFP2.